The sequence spans 313 residues: Potassium channel subfamily K member 6 (313 aa).

The Cytoplasmic segment spans residues Met-1–Gly-4. The chain crosses the membrane as a helical span at residues Ala-5–Val-25. N-linked (GlcNAc...) asparagine glycans are attached at residues Asn-79 and Asn-85. Positions Ala-90 to Leu-115 form an intramembrane region, pore-forming. Residues Thr-106, Val-107, Gly-108, and Tyr-109 each contribute to the K(+) site. A selectivity filter 1 region spans residues Thr-106 to Tyr-111. A helical transmembrane segment spans residues Ala-121–Ser-141. Residues Ala-142 to His-172 are Cytoplasmic-facing. A helical transmembrane segment spans residues Leu-173–Ala-193. An intramembrane region (pore-forming) is located at residues Trp-199–Gly-223. The K(+) site is built by Thr-214, Ile-215, and Gly-216. Residues Thr-214–Asp-219 form a selectivity filter 2 region. A helical membrane pass occupies residues Val-236 to Phe-256. At Arg-257–Arg-313 the chain is on the cytoplasmic side. A Lysosomal targeting signal motif is present at residues Asp-282 to Leu-290. The interval Asp-288 to Arg-313 is disordered. Over residues Glu-295–Asp-307 the composition is skewed to polar residues. The short motif at Tyr-308 to Pro-312 is the Lysosomal targeting signal element.

Belongs to the two pore domain potassium channel (TC 1.A.1.8) family. In terms of assembly, homodimer; disulfide-linked. In terms of processing, N-glycosylation is necessary for targeting to lysosomes. Widespread expression, detected in all tissues tested except for skeletal muscle. Strongest expression in placenta, pancreas, heart, colon and spleen, lower levels detected in peripheral blood leukocytes, lung, liver, kidney and thymus. Lowest expression detected in brain.

The protein resides in the late endosome membrane. It localises to the lysosome membrane. The catalysed reaction is K(+)(in) = K(+)(out). Its function is as follows. K(+) channel that conducts outward rectifying currents at the membranes of the endolysosomal system. Active in lysosomes where it regulates lysosome numbers and size. In macrophages, enables K(+) efflux coupled to ATP-induced NLRP3 inflammasome activation upon bacterial infection. Cooperates with ATP-gated P2RX7 channels to activate NLRP3 inflammasome, with P2RX7 conducting Ca(2+) and Na(+) influx that sets the membrane potential for K(+) efflux. In terms of biological role, does not display channel activity. The protein is Potassium channel subfamily K member 6 of Homo sapiens (Human).